Reading from the N-terminus, the 777-residue chain is E3 UFM1-protein ligase 1 homolog (777 aa).

The segment covering Met396–Glu417 has biased composition (basic and acidic residues). A disordered region spans residues Met396–Asp470.

Belongs to the UFL1 family.

Its function is as follows. E3 UFM1-protein ligase that mediates ufmylation of target proteins. This Aedes aegypti (Yellowfever mosquito) protein is E3 UFM1-protein ligase 1 homolog.